Reading from the N-terminus, the 176-residue chain is Ribosome maturation factor RimM (176 aa).

The PRC barrel domain occupies 100 to 172 (PDTYYDHQLV…IVEIDPPHGL (73 aa)).

Belongs to the RimM family. As to quaternary structure, binds ribosomal protein uS19.

It localises to the cytoplasm. Its function is as follows. An accessory protein needed during the final step in the assembly of 30S ribosomal subunit, possibly for assembly of the head region. Essential for efficient processing of 16S rRNA. May be needed both before and after RbfA during the maturation of 16S rRNA. It has affinity for free ribosomal 30S subunits but not for 70S ribosomes. In Mycobacterium bovis (strain ATCC BAA-935 / AF2122/97), this protein is Ribosome maturation factor RimM.